Here is a 308-residue protein sequence, read N- to C-terminus: Glutaminase 2 (308 aa).

Substrate contacts are provided by S66, N117, E161, N168, Y192, Y244, and V262.

This sequence belongs to the glutaminase family. Homotetramer.

The enzyme catalyses L-glutamine + H2O = L-glutamate + NH4(+). In Shigella flexneri, this protein is Glutaminase 2.